We begin with the raw amino-acid sequence, 497 residues long: MASPAPPEHAEEGCPAPAAEEQAPPSPPPPQASPAERQQQEEEAQEAGAAEGAGLQVEEAAGRAAAAVTWLLGEPVLWLGCRADELLSWKRPLRSLLGFVAANLLFWFLALTPWRVYHLISVMILGRVIMQIIKDMVLSRTRGAQLWRSLSESWEVINSKPDERPRLSHCIAESWMNFSIFLQEMSLFKQQSPGKFCLLVCSVCTFFTILGSYIPGVILSYLLLLCAFLCPLFKCNDIGQKIYSKIKSVLLKLDFGIGEYINQKKRERSEADKEKSHKDDSELDFSALCPKISLTVAAKELSVSDTDVSEVSWTDNGTFNLSEGYTPQTDTSDDLDRPSEEVFSRDLSDFPSLENGMGTNDEDELSLGLPTELKRKKEQLDSGHRPSKETQSAAGLTLPLNSDQTFHLMSNLAGDVITAAVTAAIKDQLEGVQQALSQAAPIPEEDTDTEEGDDFELLDQSELDQIESELGLTQDQEAEAQQNKKSSGFLSNLLGGH.

Residues 1 to 51 (MASPAPPEHAEEGCPAPAAEEQAPPSPPPPQASPAERQQQEEEAQEAGAAE) are disordered. Residues 1–59 (MASPAPPEHAEEGCPAPAAEEQAPPSPPPPQASPAERQQQEEEAQEAGAAEGAGLQVEE) are Cytoplasmic-facing. Positions 13 to 23 (GCPAPAAEEQA) are enriched in low complexity. Residues 60-80 (AAGRAAAAVTWLLGEPVLWLG) traverse the membrane as a helical segment. Residues 81–95 (CRADELLSWKRPLRS) lie on the Lumenal side of the membrane. Positions 84-233 (DELLSWKRPL…LLCAFLCPLF (150 aa)) are reticulon homology domain. Residues 96–116 (LLGFVAANLLFWFLALTPWRV) traverse the membrane as a helical segment. The Cytoplasmic segment spans residues 117–118 (YH). The helical transmembrane segment at 119-139 (LISVMILGRVIMQIIKDMVLS) threads the bilayer. Residues 140–208 (RTRGAQLWRS…LVCSVCTFFT (69 aa)) lie on the Lumenal side of the membrane. The residue at position 149 (Ser149) is a Phosphoserine. Ser151 is subject to Phosphoserine; by CAMK2B. Ser153 is subject to Phosphoserine. Residues 209-229 (ILGSYIPGVILSYLLLLCAFL) traverse the membrane as a helical segment. Residues 230–497 (CPLFKCNDIG…GFLSNLLGGH (268 aa)) lie on the Cytoplasmic side of the membrane. Residues 319 to 330 (FNLSEGYTPQTD) are compositionally biased toward polar residues. Disordered stretches follow at residues 319–365 (FNLS…EDEL), 377–396 (KEQLDSGHRPSKETQSAAGL), 436–455 (LSQAAPIPEEDTDTEEGDDF), and 468–497 (SELGLTQDQEAEAQQNKKSSGFLSNLLGGH). 2 stretches are compositionally biased toward basic and acidic residues: residues 334–348 (DLDRPSEEVFSRDLS) and 377–388 (KEQLDSGHRPSK). Positions 443 to 455 (PEEDTDTEEGDDF) are enriched in acidic residues. The LIR motif signature appears at 453-458 (DDFELL). The segment covering 471–490 (GLTQDQEAEAQQNKKSSGFL) has biased composition (polar residues).

The protein belongs to the RETREG family. In terms of assembly, homooligomer; oligomerization is enhanced following endoplasmic reticulum stress and is mediated by the reticulon homology domain. Interacts with ATG8 family modifier proteins MAP1LC3A, MAP1LC3B, MAP1LC3C, GABARAP, GABARAPL1 and GABARAPL2. Shows higher affinity for GABARAPL1 than for MAP1LC3A or MAP1LC3B. Post-translationally, phosphorylation at Ser-151 by CAMK2B enhances oligomerization and membrane scission and reticulophagy activity. Overexpressed in esophageal squamous cell carcinoma.

Its subcellular location is the golgi apparatus. It is found in the cis-Golgi network membrane. The protein localises to the endoplasmic reticulum membrane. Its function is as follows. Endoplasmic reticulum (ER)-anchored autophagy regulator which mediates ER delivery into lysosomes through sequestration into autophagosomes. Promotes membrane remodeling and ER scission via its membrane bending capacity and targets the fragments into autophagosomes via interaction with ATG8 family proteins. Active under basal conditions. Required for collagen quality control in a LIR motif-dependent manner. Required for long-term survival of nociceptive and autonomic ganglion neurons. In terms of biological role, (Microbial infection) During SARS-CoV-2 infection, RETREG1-mediated reticulophagy is promoted by SARS-CoV-2 ORF3A protein. This induces endoplasmic reticulum stress and inflammatory responses and facilitates viral infection. The protein is Reticulophagy regulator 1 of Homo sapiens (Human).